The chain runs to 501 residues: Lysine--tRNA ligase (501 aa).

Mg(2+) is bound by residues glutamate 411 and glutamate 418.

Belongs to the class-II aminoacyl-tRNA synthetase family. In terms of assembly, homodimer. It depends on Mg(2+) as a cofactor.

It localises to the cytoplasm. It catalyses the reaction tRNA(Lys) + L-lysine + ATP = L-lysyl-tRNA(Lys) + AMP + diphosphate. The polypeptide is Lysine--tRNA ligase (Pseudomonas aeruginosa (strain LESB58)).